Reading from the N-terminus, the 104-residue chain is UPF0147 protein MK1586 (104 aa).

The protein belongs to the UPF0147 family.

The sequence is that of UPF0147 protein MK1586 from Methanopyrus kandleri (strain AV19 / DSM 6324 / JCM 9639 / NBRC 100938).